A 294-amino-acid chain; its full sequence is MHNTTKRVTVPALEAMLYETIKVLDHGFIRVIDYMGDDSSIVQAARVSYGKGTKQLNQDKGLINYLLRHYHTTPFEMCDIKFHIKLPIFIARQWIRHRTASVNEYSARYSILGNEFYLPEPTDIASQSAINKQCRAGDSLPKKVSEKVLAILEEDARRCYMHYKELMNADEDGNIIDENVAGIARELARMNLTLNYYTEWYWKINLHNLLHFLRLRTDSKAQYEIRVYAGKILDIVKAWVPFTYEAFEEYRLQGANISRKGLEVIKRMIQGEKVIHETSGMNKREWEELVKIFR.

Residues 27–250 form the ThyX domain; it reads GFIRVIDYMG…PFTYEAFEEY (224 aa). Residues Thr-73, 96–98, and Glu-104 contribute to the FAD site; that span reads RHR. DUMP is bound by residues 93–96, 104–108, and Arg-189; these read QWIR and EYSAR. The ThyX motif motif lies at 96 to 106; that stretch reads RHRTASVNEYS. FAD is bound by residues 205-207 and His-211; that span reads NLH. Residue Arg-216 participates in dUMP binding. The active-site Involved in ionization of N3 of dUMP, leading to its activation is the Arg-216.

This sequence belongs to the thymidylate synthase ThyX family. As to quaternary structure, homotetramer. It depends on FAD as a cofactor.

The enzyme catalyses dUMP + (6R)-5,10-methylene-5,6,7,8-tetrahydrofolate + NADPH + H(+) = dTMP + (6S)-5,6,7,8-tetrahydrofolate + NADP(+). It participates in pyrimidine metabolism; dTTP biosynthesis. In terms of biological role, catalyzes the reductive methylation of 2'-deoxyuridine-5'-monophosphate (dUMP) to 2'-deoxythymidine-5'-monophosphate (dTMP) while utilizing 5,10-methylenetetrahydrofolate (mTHF) as the methyl donor, and NADPH and FADH(2) as the reductant. The polypeptide is Flavin-dependent thymidylate synthase (Rickettsia typhi (strain ATCC VR-144 / Wilmington)).